Consider the following 370-residue polypeptide: E3 ubiquitin-protein ligase E3D (370 aa).

At Ala-2 the chain carries N-acetylalanine. The short motif at 129–159 (PLPSENWSALVGEWCCHPDPFANKPLHPREN) is the BRAT1-like motif element. Cys-144 contacts Zn(2+). The segment at 214-236 (QPSEGSFPNIPRSQFVQSVIARC) is interaction with UBE2C. The tract at residues 332–368 (LPSTTCLELLLILSRNNASLPLSLRQMNSFQLWCSHC) is HECT-like.

As to quaternary structure, interacts with UBE2C/UbcH10 (E2 ubiquitin-conjugating enzyme). In vitro, interacts with cyclin-B. Post-translationally, ubiquitinated by UBCH10 (E2 ubiquitin-conjugating enzyme).

The protein resides in the cytoplasm. The catalysed reaction is S-ubiquitinyl-[E2 ubiquitin-conjugating enzyme]-L-cysteine + [acceptor protein]-L-lysine = [E2 ubiquitin-conjugating enzyme]-L-cysteine + N(6)-ubiquitinyl-[acceptor protein]-L-lysine.. The protein operates within protein modification; protein ubiquitination. E3 ubiquitin-protein ligase which accepts ubiquitin from specific E2 ubiquitin-conjugating enzymes, and transfers it to substrates, generally promoting their degradation by the proteasome. Independently of its E3 ubiquitin-protein ligase activity, acts as an inhibitor of CPSF3 endonuclease activity by blocking CPSF3 active site. The polypeptide is E3 ubiquitin-protein ligase E3D (Ube3d) (Rattus norvegicus (Rat)).